The primary structure comprises 248 residues: Probable transcriptional regulatory protein Oant_1200 (248 aa).

It belongs to the TACO1 family.

The protein resides in the cytoplasm. The sequence is that of Probable transcriptional regulatory protein Oant_1200 from Brucella anthropi (strain ATCC 49188 / DSM 6882 / CCUG 24695 / JCM 21032 / LMG 3331 / NBRC 15819 / NCTC 12168 / Alc 37) (Ochrobactrum anthropi).